The primary structure comprises 476 residues: ATP synthase subunit beta (476 aa).

152 to 159 (GGAGVGKT) serves as a coordination point for ATP.

Belongs to the ATPase alpha/beta chains family. In terms of assembly, F-type ATPases have 2 components, CF(1) - the catalytic core - and CF(0) - the membrane proton channel. CF(1) has five subunits: alpha(3), beta(3), gamma(1), delta(1), epsilon(1). CF(0) has three main subunits: a(1), b(2) and c(9-12). The alpha and beta chains form an alternating ring which encloses part of the gamma chain. CF(1) is attached to CF(0) by a central stalk formed by the gamma and epsilon chains, while a peripheral stalk is formed by the delta and b chains.

It is found in the cell inner membrane. The catalysed reaction is ATP + H2O + 4 H(+)(in) = ADP + phosphate + 5 H(+)(out). Its function is as follows. Produces ATP from ADP in the presence of a proton gradient across the membrane. The catalytic sites are hosted primarily by the beta subunits. The chain is ATP synthase subunit beta from Acidiphilium cryptum (strain JF-5).